Reading from the N-terminus, the 391-residue chain is 8-amino-7-oxononanoate synthase (391 aa).

Position 19 (Arg19) interacts with substrate. Residue 106 to 107 participates in pyridoxal 5'-phosphate binding; that stretch reads GY. His131 is a substrate binding site. Residues Ser178, His206, and Thr234 each contribute to the pyridoxal 5'-phosphate site. At Lys237 the chain carries N6-(pyridoxal phosphate)lysine. Thr353 contributes to the substrate binding site.

Belongs to the class-II pyridoxal-phosphate-dependent aminotransferase family. BioF subfamily. As to quaternary structure, homodimer. The cofactor is pyridoxal 5'-phosphate.

It carries out the reaction 6-carboxyhexanoyl-[ACP] + L-alanine + H(+) = (8S)-8-amino-7-oxononanoate + holo-[ACP] + CO2. The protein operates within cofactor biosynthesis; biotin biosynthesis. Functionally, catalyzes the decarboxylative condensation of pimeloyl-[acyl-carrier protein] and L-alanine to produce 8-amino-7-oxononanoate (AON), [acyl-carrier protein], and carbon dioxide. The protein is 8-amino-7-oxononanoate synthase of Geobacter sulfurreducens (strain ATCC 51573 / DSM 12127 / PCA).